A 462-amino-acid chain; its full sequence is Argininosuccinate lyase (462 aa).

It belongs to the lyase 1 family. Argininosuccinate lyase subfamily.

Its subcellular location is the cytoplasm. The catalysed reaction is 2-(N(omega)-L-arginino)succinate = fumarate + L-arginine. It participates in amino-acid biosynthesis; L-arginine biosynthesis; L-arginine from L-ornithine and carbamoyl phosphate: step 3/3. The sequence is that of Argininosuccinate lyase from Bacillus cytotoxicus (strain DSM 22905 / CIP 110041 / 391-98 / NVH 391-98).